A 366-amino-acid polypeptide reads, in one-letter code: tRNA-queuosine alpha-mannosyltransferase (366 aa).

This sequence belongs to the glycosyltransferase group 1 family. Glycosyltransferase 4 subfamily.

It localises to the cytoplasm. Its subcellular location is the nucleus. It catalyses the reaction queuosine(34) in tRNA(Asp) + GDP-alpha-D-mannose = O-4''-alpha-D-mannosylqueuosine(34) in tRNA(Asp) + GDP + H(+). Functionally, glycosyltransferase that specifically catalyzes mannosylation of cytoplasmic tRNA(Asp) modified with queuosine at position 34 (queuosine(34)). Mannosylates the cyclopentene moiety of queuosine(34) in tRNA(Asp) to form mannosyl-queuosine(34). Mannosylation of queuosine(34) in tRNA(Asp) is required to slow-down elongation at cognate codons, GAC and GAU, thereby regulating protein translation. This chain is tRNA-queuosine alpha-mannosyltransferase (GTDC1), found in Bos taurus (Bovine).